Here is a 633-residue protein sequence, read N- to C-terminus: Pescadillo homolog (633 aa).

The BRCT domain occupies 321–414 (RLRTLFKGLK…QLLPTNKYFL (94 aa)). Disordered regions lie at residues 450-470 (HAQS…DTVE) and 490-567 (KKYG…LQAR). S453 and S457 each carry phosphoserine. Composition is skewed to acidic residues over residues 454 to 470 (EDES…DTVE) and 498 to 526 (VNED…EELD). Residues 527–538 (EKEKRLLEEKQK) show a composition bias toward basic and acidic residues. Over residues 545-554 (KVHKVNKRQV) the composition is skewed to basic residues. Over residues 555–564 (HKAEVDEHRL) the composition is skewed to basic and acidic residues. The stretch at 593–626 (LLRKKRRTIETDAKEAKKLAKREARKAAAAAAAA) forms a coiled coil.

Belongs to the pescadillo family.

It localises to the nucleus. It is found in the nucleolus. The protein resides in the nucleoplasm. In terms of biological role, required for maturation of ribosomal RNAs and formation of the large ribosomal subunit. This Drosophila virilis (Fruit fly) protein is Pescadillo homolog.